The primary structure comprises 124 residues: U-scoloptoxin-Er5d (124 aa).

Residues Met1 to Gly22 form the signal peptide. The propeptide occupies Glu23 to Arg94. RLWRNWE repeat units lie at residues Arg34–Glu40, Arg61–Glu67, and Arg86–Glu92. Gln95 bears the Pyrrolidone carboxylic acid mark. The stretch at Glu107–Glu113 is one RLWRNWE 4; approximate repeat. The propeptide occupies Trp112–Glu124.

The protein belongs to the scoloptoxin-08 family. Expressed by the venom gland.

The protein localises to the secreted. This chain is U-scoloptoxin-Er5d, found in Ethmostigmus rubripes (Giant centipede).